The following is a 221-amino-acid chain: Transmembrane protein 267 (221 aa).

5 consecutive transmembrane segments (helical) span residues 28-48, 57-77, 86-106, 121-141, and 182-204; these read ASAG…LPFI, LFDN…VIGL, VILA…MAGS, LHCS…MWAC, and ISYW…LMYL.

The protein localises to the membrane. This chain is Transmembrane protein 267 (tmem267), found in Danio rerio (Zebrafish).